Consider the following 944-residue polypeptide: Weak acid resistance protein 1 (944 aa).

Residues 76–109 constitute a DNA-binding region (zn(2)-C6 fungal-type); the sequence is CVCCHSLKQKCEPSDVNDIYRKPCRRCLKHKKLC. 2 disordered regions span residues 114–171 and 197–225; these read SKRT…AKQF and SYGA…SVPT. Phosphothreonine is present on Thr128. 2 stretches are compositionally biased toward polar residues: residues 135-144 and 205-225; these read VNVSTKSKGP and TTST…SVPT.

Homodimer. Phosphorylation is required for PDR12 induction.

The protein resides in the nucleus. Transcription factor which binds to a weak acid response element (WARE) to mediate stress induction of PDR12 and FUN34, encoding an acid transporter and a putative ammonia transporter, respectively. This chain is Weak acid resistance protein 1 (WAR1), found in Saccharomyces cerevisiae (strain ATCC 204508 / S288c) (Baker's yeast).